Here is a 471-residue protein sequence, read N- to C-terminus: Cytochrome P450 monooxygenase afvE (471 aa).

The helical transmembrane segment at 265 to 285 (IIFYHFELSTPVAFFIIFAVY) threads the bilayer. Cys410 provides a ligand contact to heme.

This sequence belongs to the cytochrome P450 family. Requires heme as cofactor.

The protein resides in the membrane. It functions in the pathway secondary metabolite biosynthesis. Cytochrome P450 monooxygenase; part of the gene cluster that mediates the biosynthesis of aflavarin, a bicoumarin that exhibits anti-insectan activity against the fungivorous beetle C.hemipterus. The polypeptide is Cytochrome P450 monooxygenase afvE (Aspergillus flavus (strain ATCC 200026 / FGSC A1120 / IAM 13836 / NRRL 3357 / JCM 12722 / SRRC 167)).